The primary structure comprises 331 residues: Large ribosomal subunit protein uL3 (331 aa).

Belongs to the universal ribosomal protein uL3 family. Part of the 50S ribosomal subunit. Forms a cluster with proteins L14 and L24e.

One of the primary rRNA binding proteins, it binds directly near the 3'-end of the 23S rRNA, where it nucleates assembly of the 50S subunit. The sequence is that of Large ribosomal subunit protein uL3 from Thermoplasma volcanium (strain ATCC 51530 / DSM 4299 / JCM 9571 / NBRC 15438 / GSS1).